Here is a 374-residue protein sequence, read N- to C-terminus: Glutamate 5-kinase (374 aa).

An ATP-binding site is contributed by Lys17. Ser57, Asp144, and Asn156 together coordinate substrate. Residues 176–177 and 218–224 each bind ATP; these read SD and TGGMVTK. Positions 280–358 constitute a PUA domain; that stretch reads QGALVLDDGA…RELARELGPA (79 aa).

It belongs to the glutamate 5-kinase family.

Its subcellular location is the cytoplasm. It carries out the reaction L-glutamate + ATP = L-glutamyl 5-phosphate + ADP. Its pathway is amino-acid biosynthesis; L-proline biosynthesis; L-glutamate 5-semialdehyde from L-glutamate: step 1/2. Catalyzes the transfer of a phosphate group to glutamate to form L-glutamate 5-phosphate. The protein is Glutamate 5-kinase of Streptomyces coelicolor (strain ATCC BAA-471 / A3(2) / M145).